A 160-amino-acid polypeptide reads, in one-letter code: Phosphopantetheine adenylyltransferase (160 aa).

S10 contributes to the substrate binding site. ATP contacts are provided by residues 10–11 (SF) and H18. Substrate is bound by residues K42, L74, and R88. ATP is bound by residues 89 to 91 (GLR), E99, and 124 to 130 (YSFLSSS).

It belongs to the bacterial CoaD family. Homohexamer. Mg(2+) is required as a cofactor.

The protein resides in the cytoplasm. It catalyses the reaction (R)-4'-phosphopantetheine + ATP + H(+) = 3'-dephospho-CoA + diphosphate. It functions in the pathway cofactor biosynthesis; coenzyme A biosynthesis; CoA from (R)-pantothenate: step 4/5. Reversibly transfers an adenylyl group from ATP to 4'-phosphopantetheine, yielding dephospho-CoA (dPCoA) and pyrophosphate. This Bacillus velezensis (strain DSM 23117 / BGSC 10A6 / LMG 26770 / FZB42) (Bacillus amyloliquefaciens subsp. plantarum) protein is Phosphopantetheine adenylyltransferase.